The sequence spans 68 residues: Cytotoxic linear peptide (68 aa).

The N-terminal stretch at 1–23 (MKTQFAILLIALVLFQMFSQSEA) is a signal peptide. Leucine 36 carries the post-translational modification Leucine amide. Positions 40-68 (GLNELDDLDELFDGEISQADIDFLKELMS) are excised as a propeptide.

Belongs to the non-disulfide-bridged peptide (NDBP) superfamily. Short antimicrobial peptide (group 4) family. In terms of tissue distribution, expressed by the venom gland.

It is found in the secreted. The protein localises to the target cell membrane. Functionally, amphipathic peptide that has antibacterial activities. This is Cytotoxic linear peptide from Pandinus cavimanus (Tanzanian red clawed scorpion).